The following is a 196-amino-acid chain: WYSGMFAPNIKQEPISHHHHHHHAHHSYHQHPHDSNSNSNASSPHQSPLPSPNPPSNTNLQLEQYLKQQQQQQQQQQQQQQPMDTLCAAAMTPSSSNNDQNSPLMPPGLPNPMQSIMPANLRPSPTATTTTTPAAAAPTTTAATIALQANDKLQALTPPMDVTPPKSPAKSQQSCAEREKEHDLMSNSSEDMKYMA.

Disordered regions lie at residues 16–60 and 90–196; these read SHHH…NTNL and AMTP…KYMA. Residues 17 to 30 show a composition bias toward basic residues; that stretch reads HHHHHHHAHHSYHQ. Residues 92–103 are compositionally biased toward polar residues; sequence TPSSSNNDQNSP. The span at 125 to 144 shows a compositional bias: low complexity; the sequence is PTATTTTTPAAAAPTTTAAT. Positions 176-196 are enriched in basic and acidic residues; that stretch reads AEREKEHDLMSNSSEDMKYMA.

The protein belongs to the hunchback C2H2-type zinc-finger protein family.

It localises to the nucleus. Functionally, gap class segmentation protein that controls development of head structures. In Drosophila silvestris (Fruit fly), this protein is Protein hunchback (hb).